A 386-amino-acid polypeptide reads, in one-letter code: Phosphoglycerate kinase (386 aa).

Residues 21–23, R36, 59–62, R112, and R145 contribute to the substrate site; these read DLN and HLGR. ATP contacts are provided by residues K196, E313, and 339–342; that span reads GGDT.

This sequence belongs to the phosphoglycerate kinase family. As to quaternary structure, monomer.

The protein localises to the cytoplasm. It carries out the reaction (2R)-3-phosphoglycerate + ATP = (2R)-3-phospho-glyceroyl phosphate + ADP. It participates in carbohydrate degradation; glycolysis; pyruvate from D-glyceraldehyde 3-phosphate: step 2/5. This Haemophilus influenzae (strain PittEE) protein is Phosphoglycerate kinase.